We begin with the raw amino-acid sequence, 395 residues long: MNKLSAPRAQHAVDPVELTADLVRCQTVTPEEGSALKLLSALLSEHGFQCQRIDRNGIPNLFAIWGEDRNGRTFGFNGHTDVVPIGDPKDWTVDPFGAEIRDGILYGRGSTDMKSGVAAFAAAAIEFVNETPPDGRVIIAITGAEETGSPDGTRAIVQWMEANDIRADHFIVGEPTSLKSIGDAIKIGRRGTITVFLTVTGVQGHSGYPEKANNPLPALVDLLQGFGQAAMDEGTEFFAPSTLAITTIDTGNPARNVIPATCKATLSIRFNDKWTSGKVLDWVSRHTRAAEDKFGVTISADHYLSGECFFTPPGALSKLVQDAVEQETGQRPQMTTLGGSSDARHLFKHCPVVEVGLTGETLHQVDEHVSVAEINALKTVYGRILRDYFGSEGKI.

Zn(2+) is bound at residue histidine 79. Aspartate 81 is a catalytic residue. A Zn(2+)-binding site is contributed by aspartate 112. Catalysis depends on glutamate 145, which acts as the Proton acceptor. 3 residues coordinate Zn(2+): glutamate 146, glutamate 174, and histidine 363.

It belongs to the peptidase M20A family. DapE subfamily. Homodimer. Zn(2+) serves as cofactor. Co(2+) is required as a cofactor.

The catalysed reaction is N-succinyl-(2S,6S)-2,6-diaminopimelate + H2O = (2S,6S)-2,6-diaminopimelate + succinate. It functions in the pathway amino-acid biosynthesis; L-lysine biosynthesis via DAP pathway; LL-2,6-diaminopimelate from (S)-tetrahydrodipicolinate (succinylase route): step 3/3. Catalyzes the hydrolysis of N-succinyl-L,L-diaminopimelic acid (SDAP), forming succinate and LL-2,6-diaminopimelate (DAP), an intermediate involved in the bacterial biosynthesis of lysine and meso-diaminopimelic acid, an essential component of bacterial cell walls. The chain is Succinyl-diaminopimelate desuccinylase 2 from Ruegeria sp. (strain TM1040) (Silicibacter sp.).